We begin with the raw amino-acid sequence, 295 residues long: Translational activator of cytochrome c oxidase 1 (295 aa).

Lys162 is subject to N6-acetyllysine. A coiled-coil region spans residues 190 to 225 (VEDREKKAVNLERALELAIEAGAEDVREAEDEEEEK).

This sequence belongs to the TACO1 family.

The protein resides in the mitochondrion. Acts as a translational activator of mitochondrially-encoded cytochrome c oxidase 1. This chain is Translational activator of cytochrome c oxidase 1, found in Rattus norvegicus (Rat).